A 528-amino-acid chain; its full sequence is Probable rhamnogalacturonate lyase A (528 aa).

The N-terminal stretch at 1–20 (MLSKATLLLSLPFWARVANA) is a signal peptide. A glycan (N-linked (GlcNAc...) asparagine) is linked at N46. Disulfide bonds link C50/C93 and C184/C193. An N-linked (GlcNAc...) asparagine glycan is attached at N351.

The protein belongs to the polysaccharide lyase 4 family.

It is found in the secreted. The catalysed reaction is Endotype eliminative cleavage of L-alpha-rhamnopyranosyl-(1-&gt;4)-alpha-D-galactopyranosyluronic acid bonds of rhamnogalacturonan I domains in ramified hairy regions of pectin leaving L-rhamnopyranose at the reducing end and 4-deoxy-4,5-unsaturated D-galactopyranosyluronic acid at the non-reducing end.. In terms of biological role, pectinolytic enzymes consist of four classes of enzymes: pectin lyase, polygalacturonase, pectin methylesterase and rhamnogalacturonase. Degrades the rhamnogalacturonan I (RG-I) backbone of pectin. This Neosartorya fischeri (strain ATCC 1020 / DSM 3700 / CBS 544.65 / FGSC A1164 / JCM 1740 / NRRL 181 / WB 181) (Aspergillus fischerianus) protein is Probable rhamnogalacturonate lyase A (rglA).